Here is a 209-residue protein sequence, read N- to C-terminus: Large ribosomal subunit protein uL3 (209 aa).

Glutamine 150 is subject to N5-methylglutamine.

The protein belongs to the universal ribosomal protein uL3 family. In terms of assembly, part of the 50S ribosomal subunit. Forms a cluster with proteins L14 and L19. Methylated by PrmB.

One of the primary rRNA binding proteins, it binds directly near the 3'-end of the 23S rRNA, where it nucleates assembly of the 50S subunit. The protein is Large ribosomal subunit protein uL3 of Vibrio campbellii (strain ATCC BAA-1116).